A 542-amino-acid chain; its full sequence is CTP synthase (542 aa).

An amidoligase domain region spans residues 1-265; the sequence is MARYIFITGG…DQEVLAAFGI (265 aa). Residue Ser13 participates in CTP binding. UTP is bound at residue Ser13. 14 to 19 is a binding site for ATP; that stretch reads SLGKGL. L-glutamine is bound at residue Tyr54. Position 71 (Asp71) interacts with ATP. Asp71 and Glu139 together coordinate Mg(2+). CTP is bound by residues 146–148, 186–191, and Lys222; these read DIE and KTKPTQ. UTP is bound by residues 186-191 and Lys222; that span reads KTKPTQ. 238–240 is a binding site for ATP; the sequence is RDV. Residues 291 to 541 enclose the Glutamine amidotransferase type-1 domain; it reads TIAIVGKYTG…IAAALEQSRL (251 aa). Gly353 is an L-glutamine binding site. Cys380 serves as the catalytic Nucleophile; for glutamine hydrolysis. L-glutamine is bound by residues 381-384, Glu404, and Arg469; that span reads FGMQ. Residues His514 and Glu516 contribute to the active site.

Belongs to the CTP synthase family. In terms of assembly, homotetramer.

It carries out the reaction UTP + L-glutamine + ATP + H2O = CTP + L-glutamate + ADP + phosphate + 2 H(+). The catalysed reaction is L-glutamine + H2O = L-glutamate + NH4(+). It catalyses the reaction UTP + NH4(+) + ATP = CTP + ADP + phosphate + 2 H(+). It functions in the pathway pyrimidine metabolism; CTP biosynthesis via de novo pathway; CTP from UDP: step 2/2. Its activity is regulated as follows. Allosterically activated by GTP, when glutamine is the substrate; GTP has no effect on the reaction when ammonia is the substrate. The allosteric effector GTP functions by stabilizing the protein conformation that binds the tetrahedral intermediate(s) formed during glutamine hydrolysis. Inhibited by the product CTP, via allosteric rather than competitive inhibition. Functionally, catalyzes the ATP-dependent amination of UTP to CTP with either L-glutamine or ammonia as the source of nitrogen. Regulates intracellular CTP levels through interactions with the four ribonucleotide triphosphates. The protein is CTP synthase of Methylocella silvestris (strain DSM 15510 / CIP 108128 / LMG 27833 / NCIMB 13906 / BL2).